The primary structure comprises 482 residues: Glutamyl-tRNA(Gln) amidotransferase subunit A (482 aa).

Catalysis depends on charge relay system residues Lys81 and Ser156. Residue Ser180 is the Acyl-ester intermediate of the active site.

The protein belongs to the amidase family. GatA subfamily. In terms of assembly, heterotrimer of A, B and C subunits.

The enzyme catalyses L-glutamyl-tRNA(Gln) + L-glutamine + ATP + H2O = L-glutaminyl-tRNA(Gln) + L-glutamate + ADP + phosphate + H(+). In terms of biological role, allows the formation of correctly charged Gln-tRNA(Gln) through the transamidation of misacylated Glu-tRNA(Gln) in organisms which lack glutaminyl-tRNA synthetase. The reaction takes place in the presence of glutamine and ATP through an activated gamma-phospho-Glu-tRNA(Gln). The sequence is that of Glutamyl-tRNA(Gln) amidotransferase subunit A from Brachyspira hyodysenteriae (strain ATCC 49526 / WA1).